A 348-amino-acid polypeptide reads, in one-letter code: MNGTEGLNFYVPFSNKTGVVRSPFEYPQYYLAEPWQFSVLAAYMFLLIVLGFPINFLTLYVTVQHKKLRTPLNYILLNLAVANLFMVFGGFTTTLYTSLHAYFVFGPTGCNLEGFFATLGGEIALWSLVVLAIERYVVVCKPMSNFRFGENHAIMGLALTWIMAMACAAAPLVGWSRYIPEGMQCSCGIDYYTSRQEVNNESFVIYMFVVHFTIPLVIIFFCYGQLVFTVKEAAAQQQESATTQKAEKEVTRMVIIMVVAFLICWVPYASVAFYIFTHQGSDFGPIFMTIPSFFAKSSSIYNPVIYIMMNKQFRNCMLTTLCCGRNPLGDDEASTTASKTETSQVAPA.

Met-1 carries the post-translational modification N-acetylmethionine. The Extracellular portion of the chain corresponds to 1–36; it reads MNGTEGLNFYVPFSNKTGVVRSPFEYPQYYLAEPWQ. Residues Asn-2 and Asn-15 are each glycosylated (N-linked (GlcNAc...) asparagine). The helical transmembrane segment at 37–61 threads the bilayer; the sequence is FSVLAAYMFLLIVLGFPINFLTLYV. The Cytoplasmic segment spans residues 62–73; the sequence is TVQHKKLRTPLN. The helical transmembrane segment at 74–99 threads the bilayer; that stretch reads YILLNLAVANLFMVFGGFTTTLYTSL. Topologically, residues 100-111 are extracellular; that stretch reads HAYFVFGPTGCN. Cys-110 and Cys-187 are joined by a disulfide. The helical transmembrane segment at 112-133 threads the bilayer; that stretch reads LEGFFATLGGEIALWSLVVLAI. The 'Ionic lock' involved in activated form stabilization signature appears at 134–136; the sequence is ERY. Topologically, residues 134–152 are cytoplasmic; sequence ERYVVVCKPMSNFRFGENH. Residues 153–173 traverse the membrane as a helical segment; it reads AIMGLALTWIMAMACAAAPLV. Residues 174-202 lie on the Extracellular side of the membrane; sequence GWSRYIPEGMQCSCGIDYYTSRQEVNNES. Glu-201 lines the Zn(2+) pocket. Residues 203 to 227 traverse the membrane as a helical segment; sequence FVIYMFVVHFTIPLVIIFFCYGQLV. The Cytoplasmic portion of the chain corresponds to 228 to 252; it reads FTVKEAAAQQQESATTQKAEKEVTR. A helical transmembrane segment spans residues 253 to 274; the sequence is MVIIMVVAFLICWVPYASVAFY. Residues 275–286 lie on the Extracellular side of the membrane; the sequence is IFTHQGSDFGPI. Gln-279 contributes to the Zn(2+) binding site. A helical transmembrane segment spans residues 287–306; that stretch reads FMTIPSFFAKSSSIYNPVIY. Lys-296 bears the N6-(retinylidene)lysine mark. The Cytoplasmic portion of the chain corresponds to 307-348; sequence IMMNKQFRNCMLTTLCCGRNPLGDDEASTTASKTETSQVAPA. S-palmitoyl cysteine attachment occurs at residues Cys-322 and Cys-323. Ser-334 is modified (phosphoserine). Phosphothreonine is present on residues Thr-335 and Thr-336. Position 338 is a phosphoserine (Ser-338). Phosphothreonine is present on residues Thr-340 and Thr-342. Ser-343 carries the post-translational modification Phosphoserine.

The protein belongs to the G-protein coupled receptor 1 family. Opsin subfamily. Homodimer. May form a complex composed of RHO, GRK1 and RCVRN in a Ca(2+)-dependent manner; RCVRN prevents the interaction between GRK1 and RHO. Interacts with GRK1. Interacts (phosphorylated form) with SAG. Interacts with GNAT1. Interacts with GNAT3. SAG and G-proteins compete for a common binding site. Interacts with PRCD; the interaction promotes PRCD stability. Forms a complex with ASAP1 and ARF4. Forms a complex with ASAP1, RAB11A, Rabin8/RAB3IP, ARF4 and RAB11FIP3; the complex regulates Golgi-to-cilia rhodopsin/RHO transport in photoreceptors. In terms of processing, contains one covalently linked retinal chromophore. Upon light absorption, the covalently bound 11-cis-retinal is converted to all-trans-retinal. After hydrolysis of the Schiff base and release of the covalently bound all-trans-retinal, active rhodopsin is regenerated by binding of a fresh molecule of 11-cis-retinal.

The protein resides in the membrane. Its subcellular location is the cell projection. It is found in the cilium. It localises to the photoreceptor outer segment. Photoreceptor required for image-forming vision at low light intensity. Light-induced isomerization of 11-cis to all-trans retinal triggers a conformational change that activates signaling via G-proteins. Signaling mediates the activation of phospholipase C. Subsequent receptor phosphorylation mediates displacement of the bound G-protein alpha subunit by arrestin and terminates signaling. The chain is Rhodopsin (RHO) from Tursiops truncatus (Atlantic bottle-nosed dolphin).